A 607-amino-acid polypeptide reads, in one-letter code: NAD-dependent malic enzyme 2, mitochondrial (607 aa).

The N-terminal 32 residues, 1–32 (MMWKNIAGLSKAAAAARTHGSRRCFSTAIPGP), are a transit peptide targeting the mitochondrion. The active-site Proton donor is the Tyr136. Arg189 serves as a coordination point for NAD(+). Lys207 acts as the Proton acceptor in catalysis. The a divalent metal cation site is built by Glu278, Asp279, and Asp302. Residues Asp302 and Asn449 each coordinate NAD(+).

The protein belongs to the malic enzymes family. Homodimer. Heterodimer of two related subunits in NAD-MEH complex. Interacts with NAD-ME1. The cofactor is Mg(2+). Requires Mn(2+) as cofactor. Expressed in leaves, stems, flowers, and roots (at protein level). Present in pollen.

The protein localises to the mitochondrion. It catalyses the reaction (S)-malate + NAD(+) = pyruvate + CO2 + NADH. With respect to regulation, activated by 2-ketoglutarate, phosphoenolpyruvate (PEP), fructose 1,6-biphosphate (FBP) and coenzyme A (acetyl-CoA and CoA) as homodimer and by oxaloacetate (OAA), 2-ketoglutarate, succinate, fumarate and CoA as heterodimer NAD-MEH. Repressed by succinate and fumarate as homodimer, in the presence of NAD(+) and competitively toward the substrate L-malate. In terms of biological role, involved in the regulation of sugars and amino acids metabolisms during the night period. The polypeptide is NAD-dependent malic enzyme 2, mitochondrial (NAD-ME2) (Arabidopsis thaliana (Mouse-ear cress)).